Reading from the N-terminus, the 91-residue chain is Putative methyltransferase YfdM (91 aa).

The sequence is that of Putative methyltransferase YfdM (yfdM) from Escherichia coli (strain K12).